The following is a 179-amino-acid chain: uncharacterized protein (179 aa).

The segment at 27 to 54 (TAKKSRVQAREARAAVEENKKAQLERDK) is disordered.

This is an uncharacterized protein from Escherichia coli (strain K12).